Reading from the N-terminus, the 618-residue chain is DNA mismatch repair protein MutL (618 aa).

The disordered stretch occupies residues 371–401; that stretch reads AREPATPRYSGGASGGSGGRQSVGGWSHAQP. Residues 382–392 show a composition bias toward gly residues; the sequence is GASGGSGGRQS.

It belongs to the DNA mismatch repair MutL/HexB family.

Its function is as follows. This protein is involved in the repair of mismatches in DNA. It is required for dam-dependent methyl-directed DNA mismatch repair. May act as a 'molecular matchmaker', a protein that promotes the formation of a stable complex between two or more DNA-binding proteins in an ATP-dependent manner without itself being part of a final effector complex. In Salmonella arizonae (strain ATCC BAA-731 / CDC346-86 / RSK2980), this protein is DNA mismatch repair protein MutL.